Reading from the N-terminus, the 631-residue chain is Phosphomethylpyrimidine synthase (631 aa).

Residues Asn231, Met260, Tyr289, His325, 345–347 (SRG), 386–389 (DGLR), and Glu425 each bind substrate. Zn(2+) is bound at residue His429. Tyr452 contacts substrate. His493 contacts Zn(2+). Positions 573, 576, and 581 each coordinate [4Fe-4S] cluster.

This sequence belongs to the ThiC family. Homodimer. The cofactor is [4Fe-4S] cluster.

The catalysed reaction is 5-amino-1-(5-phospho-beta-D-ribosyl)imidazole + S-adenosyl-L-methionine = 4-amino-2-methyl-5-(phosphooxymethyl)pyrimidine + CO + 5'-deoxyadenosine + formate + L-methionine + 3 H(+). It functions in the pathway cofactor biosynthesis; thiamine diphosphate biosynthesis. Catalyzes the synthesis of the hydroxymethylpyrimidine phosphate (HMP-P) moiety of thiamine from aminoimidazole ribotide (AIR) in a radical S-adenosyl-L-methionine (SAM)-dependent reaction. The polypeptide is Phosphomethylpyrimidine synthase (Acinetobacter baylyi (strain ATCC 33305 / BD413 / ADP1)).